Consider the following 473-residue polypeptide: MAP kinase-activated protein kinase 5 (473 aa).

Residues 22–304 (INWTQKLGAG…IEGVLDHPWL (283 aa)) form the Protein kinase domain. ATP is bound by residues 28–36 (LGAGISGPV) and lysine 51. Phosphoserine; by PKA is present on serine 115. Aspartate 148 functions as the Proton acceptor in the catalytic mechanism. Threonine 182 is modified (phosphothreonine; by MAPK11, MAPK14, MAPK4, MAPK6 and PKA). Phosphoserine is present on residues serine 212 and serine 354. Positions 409–440 (ENEDEKLNEVMQEAWKYNRECKLLRDALQSFS) form a coiled coil.

It belongs to the protein kinase superfamily. CAMK Ser/Thr protein kinase family. As to quaternary structure, interacts with SQSTM1. Interacts with ERK3/MAPK6 and ERK4/MAPK4 (via FRIEDE motif); the interaction is direct. Interacts with YWHAE; the interaction prevents phosphorylation of HSP27/HSPB1 leading to disrupt F-actin polymerization. Phosphorylated on Thr-182 ERK3/MAPK6 or ERK4/MAPK4; which is the regulatory phosphorylation site and is located on the T-loop/loop 12, leading to activation. Phosphorylation at Thr-182 by p38-alpha/MAPK14, p38-beta/MAPK11 is subject to debate. Phosphorylated at Ser-115 by PKA/PRKACA, leading to localization to the cytoplasm. Autophosphorylated. In terms of tissue distribution, expressed ubiquitously.

The protein localises to the cytoplasm. Its subcellular location is the nucleus. It carries out the reaction L-seryl-[protein] + ATP = O-phospho-L-seryl-[protein] + ADP + H(+). The enzyme catalyses L-threonyl-[protein] + ATP = O-phospho-L-threonyl-[protein] + ADP + H(+). With respect to regulation, activated following phosphorylation at Thr-182 by p38-alpha/MAPK14, p38-beta/MAPK11, ERK2/MAPK1, ERK3/MAPK6, and ERK4/MAPK4. Activated by stress-related extracellular stimuli; such as H(2)O(2), arsenite, anisomycin TNF alpha and also PMA and the calcium ionophore A23187; but to a lesser extent. In vitro, activated by SQSTM1. Inhibited by diterpenoid alkaloid noroxoaconitine. Its function is as follows. Tumor suppressor serine/threonine-protein kinase involved in mTORC1 signaling and post-transcriptional regulation. Phosphorylates FOXO3, ERK3/MAPK6, ERK4/MAPK4, HSP27/HSPB1, p53/TP53 and RHEB. Acts as a tumor suppressor by mediating Ras-induced senescence and phosphorylating p53/TP53. Involved in post-transcriptional regulation of MYC by mediating phosphorylation of FOXO3: phosphorylation of FOXO3 leads to promote nuclear localization of FOXO3, enabling expression of miR-34b and miR-34c, 2 post-transcriptional regulators of MYC that bind to the 3'UTR of MYC transcript and prevent MYC translation. Acts as a negative regulator of mTORC1 signaling by mediating phosphorylation and inhibition of RHEB. Part of the atypical MAPK signaling via its interaction with ERK3/MAPK6 or ERK4/MAPK4: the precise role of the complex formed with ERK3/MAPK6 or ERK4/MAPK4 is still unclear, but the complex follows a complex set of phosphorylation events: upon interaction with atypical MAPK (ERK3/MAPK6 or ERK4/MAPK4), ERK3/MAPK6 (or ERK4/MAPK4) is phosphorylated and then mediates phosphorylation and activation of MAPKAPK5, which in turn phosphorylates ERK3/MAPK6 (or ERK4/MAPK4). Mediates phosphorylation of HSP27/HSPB1 in response to PKA/PRKACA stimulation, inducing F-actin rearrangement. This is MAP kinase-activated protein kinase 5 (Mapkapk5) from Mus musculus (Mouse).